The chain runs to 255 residues: 3-dehydroquinate dehydratase (255 aa).

3-dehydroquinate contacts are provided by residues 47–49 (EWR) and R83. H145 acts as the Proton donor/acceptor in catalysis. K172 functions as the Schiff-base intermediate with substrate in the catalytic mechanism. 3 residues coordinate 3-dehydroquinate: R215, S234, and Q238.

Belongs to the type-I 3-dehydroquinase family. As to quaternary structure, homodimer.

It carries out the reaction 3-dehydroquinate = 3-dehydroshikimate + H2O. It participates in metabolic intermediate biosynthesis; chorismate biosynthesis; chorismate from D-erythrose 4-phosphate and phosphoenolpyruvate: step 3/7. Its function is as follows. Involved in the third step of the chorismate pathway, which leads to the biosynthesis of aromatic amino acids. Catalyzes the cis-dehydration of 3-dehydroquinate (DHQ) and introduces the first double bond of the aromatic ring to yield 3-dehydroshikimate. The polypeptide is 3-dehydroquinate dehydratase (Clostridium kluyveri (strain NBRC 12016)).